The primary structure comprises 425 residues: Serine--tRNA ligase (425 aa).

Position 228 to 230 (228 to 230 (TAE)) interacts with L-serine. 259–261 (RSE) is an ATP binding site. Glu282 contacts L-serine. Position 346–349 (346–349 (EIAS)) interacts with ATP. Ser382 serves as a coordination point for L-serine.

The protein belongs to the class-II aminoacyl-tRNA synthetase family. Type-1 seryl-tRNA synthetase subfamily. In terms of assembly, homodimer. The tRNA molecule binds across the dimer.

Its subcellular location is the cytoplasm. The catalysed reaction is tRNA(Ser) + L-serine + ATP = L-seryl-tRNA(Ser) + AMP + diphosphate + H(+). It catalyses the reaction tRNA(Sec) + L-serine + ATP = L-seryl-tRNA(Sec) + AMP + diphosphate + H(+). The protein operates within aminoacyl-tRNA biosynthesis; selenocysteinyl-tRNA(Sec) biosynthesis; L-seryl-tRNA(Sec) from L-serine and tRNA(Sec): step 1/1. Its function is as follows. Catalyzes the attachment of serine to tRNA(Ser). Is also able to aminoacylate tRNA(Sec) with serine, to form the misacylated tRNA L-seryl-tRNA(Sec), which will be further converted into selenocysteinyl-tRNA(Sec). The chain is Serine--tRNA ligase from Rickettsia peacockii (strain Rustic).